We begin with the raw amino-acid sequence, 432 residues long: Gamma-glutamyl phosphate reductase (432 aa).

Belongs to the gamma-glutamyl phosphate reductase family.

It is found in the cytoplasm. The catalysed reaction is L-glutamate 5-semialdehyde + phosphate + NADP(+) = L-glutamyl 5-phosphate + NADPH + H(+). The protein operates within amino-acid biosynthesis; L-proline biosynthesis; L-glutamate 5-semialdehyde from L-glutamate: step 2/2. In terms of biological role, catalyzes the NADPH-dependent reduction of L-glutamate 5-phosphate into L-glutamate 5-semialdehyde and phosphate. The product spontaneously undergoes cyclization to form 1-pyrroline-5-carboxylate. This Clavibacter michiganensis subsp. michiganensis (strain NCPPB 382) protein is Gamma-glutamyl phosphate reductase.